The sequence spans 190 residues: dCTP deaminase (190 aa).

DCTP is bound by residues 111–116 (KSTYAR), 135–137 (TLE), Q156, Y172, and Q182. Residue E137 is the Proton donor/acceptor of the active site.

It belongs to the dCTP deaminase family. As to quaternary structure, homotrimer.

The catalysed reaction is dCTP + H2O + H(+) = dUTP + NH4(+). The protein operates within pyrimidine metabolism; dUMP biosynthesis; dUMP from dCTP (dUTP route): step 1/2. Functionally, catalyzes the deamination of dCTP to dUTP. The sequence is that of dCTP deaminase from Stenotrophomonas maltophilia (strain R551-3).